The chain runs to 546 residues: Aladin (546 aa).

Residue Cys2 is modified to N-acetylcysteine. Residue Ser33 is modified to Phosphoserine. WD repeat units follow at residues 142 to 180 (EFAQ…VYNA), 183 to 222 (TIVP…IWTL), 234 to 274 (GCAQ…VWDV), 280 to 316 (VPLP…VWEA), 324 to 380 (WPTL…IVAD), 386 to 433 (IQTP…LFRT), and 442 to 482 (LPCG…IAHI). Phosphoserine is present on residues Ser495, Ser511, Ser522, and Ser525. The tract at residues 500 to 546 (RAQEPPAGGGGSIHDLPLFTETSPTSAPWDPLPGPPPVLPHSPHSHL) is disordered. Pro residues predominate over residues 529–539 (DPLPGPPPVLP). At Ser541 the chain carries Phosphoserine. Residues 544–546 (SHL) carry the Microbody targeting signal motif.

As to quaternary structure, interacts with NDC1, the interaction is required for nuclear pore localization. Interacts with the inactive form aurora kinase AURKA. Interacts with PGRMC2. As to expression, widely expressed. Particularly abundant in cerebellum, corpus callosum, adrenal gland, pituitary gland, gastrointestinal structures and fetal lung.

The protein localises to the nucleus. It localises to the nuclear pore complex. Its subcellular location is the cytoplasm. The protein resides in the cytoskeleton. It is found in the spindle pole. The protein localises to the nucleus envelope. In terms of biological role, plays a role in the normal development of the peripheral and central nervous system. Required for the correct localization of aurora kinase AURKA and the microtubule minus end-binding protein NUMA1 as well as a subset of AURKA targets which ensures proper spindle formation and timely chromosome alignment. This chain is Aladin (AAAS), found in Homo sapiens (Human).